Consider the following 367-residue polypeptide: Probable dual-specificity RNA methyltransferase RlmN (367 aa).

The active-site Proton acceptor is Glu-92. In terms of domain architecture, Radical SAM core spans 98–326; it reads QEYGLSVCVT…YDTLKKNGIN (229 aa). An intrachain disulfide couples Cys-105 to Cys-341. [4Fe-4S] cluster-binding residues include Cys-112, Cys-116, and Cys-119. S-adenosyl-L-methionine-binding positions include 164–165, Ser-196, 219–221, and Asn-297; these read GE and SLH. Cys-341 acts as the S-methylcysteine intermediate in catalysis.

It belongs to the radical SAM superfamily. RlmN family. The cofactor is [4Fe-4S] cluster.

It localises to the cytoplasm. The enzyme catalyses adenosine(2503) in 23S rRNA + 2 reduced [2Fe-2S]-[ferredoxin] + 2 S-adenosyl-L-methionine = 2-methyladenosine(2503) in 23S rRNA + 5'-deoxyadenosine + L-methionine + 2 oxidized [2Fe-2S]-[ferredoxin] + S-adenosyl-L-homocysteine. It catalyses the reaction adenosine(37) in tRNA + 2 reduced [2Fe-2S]-[ferredoxin] + 2 S-adenosyl-L-methionine = 2-methyladenosine(37) in tRNA + 5'-deoxyadenosine + L-methionine + 2 oxidized [2Fe-2S]-[ferredoxin] + S-adenosyl-L-homocysteine. Its function is as follows. Specifically methylates position 2 of adenine 2503 in 23S rRNA and position 2 of adenine 37 in tRNAs. In Listeria innocua serovar 6a (strain ATCC BAA-680 / CLIP 11262), this protein is Probable dual-specificity RNA methyltransferase RlmN.